The chain runs to 187 residues: UPF0232 protein Mb0004 (187 aa).

2 stretches are compositionally biased toward basic and acidic residues: residues 1 to 17 and 35 to 45; these read MTGS…ERLM and AARARGQDAGR. Disordered stretches follow at residues 1-23, 35-75, and 168-187; these read MTGS…PGLD, AARA…DPQP, and PSWR…DTYG.

It belongs to the UPF0232 family.

This chain is UPF0232 protein Mb0004, found in Mycobacterium bovis (strain ATCC BAA-935 / AF2122/97).